A 225-amino-acid polypeptide reads, in one-letter code: Germin-like protein 8-6 (225 aa).

A signal peptide spans 1–23; the sequence is MASPSSLCLLTALLALVSWQTIA. Cysteine 33 and cysteine 48 are oxidised to a cystine. The Cupin type-1 domain occupies 63–213; sequence AMLDTPRKTN…AFQVEKGTID (151 aa). Residue asparagine 77 is glycosylated (N-linked (GlcNAc...) asparagine). Positions 110, 112, and 117 each coordinate Mn(2+). N-linked (GlcNAc...) asparagine glycosylation is present at asparagine 136. A Mn(2+)-binding site is contributed by histidine 158.

Belongs to the germin family. In terms of assembly, oligomer (believed to be a pentamer but probably hexamer).

The protein localises to the secreted. It is found in the extracellular space. It localises to the apoplast. Functionally, plays a role in broad-spectrum disease resistance. Probably has no oxalate oxidase activity even if the active site is conserved. This Oryza sativa subsp. japonica (Rice) protein is Germin-like protein 8-6.